The chain runs to 203 residues: Orotate phosphoribosyltransferase (203 aa).

5-phospho-alpha-D-ribose 1-diphosphate-binding positions include Arg-94, Lys-98, His-100, and 120 to 128 (EDLISTGGS). Orotate is bound at residue Ser-124.

Belongs to the purine/pyrimidine phosphoribosyltransferase family. PyrE subfamily. As to quaternary structure, homodimer. Mg(2+) is required as a cofactor.

The catalysed reaction is orotidine 5'-phosphate + diphosphate = orotate + 5-phospho-alpha-D-ribose 1-diphosphate. The protein operates within pyrimidine metabolism; UMP biosynthesis via de novo pathway; UMP from orotate: step 1/2. Its function is as follows. Catalyzes the transfer of a ribosyl phosphate group from 5-phosphoribose 1-diphosphate to orotate, leading to the formation of orotidine monophosphate (OMP). The chain is Orotate phosphoribosyltransferase from Staphylococcus saprophyticus subsp. saprophyticus (strain ATCC 15305 / DSM 20229 / NCIMB 8711 / NCTC 7292 / S-41).